Reading from the N-terminus, the 444-residue chain is Methylenetetrahydrofolate--tRNA-(uracil-5-)-methyltransferase TrmFO (444 aa).

Residue Gly-10–Gly-15 coordinates FAD.

This sequence belongs to the MnmG family. TrmFO subfamily. Requires FAD as cofactor.

It is found in the cytoplasm. It carries out the reaction uridine(54) in tRNA + (6R)-5,10-methylene-5,6,7,8-tetrahydrofolate + NADH + H(+) = 5-methyluridine(54) in tRNA + (6S)-5,6,7,8-tetrahydrofolate + NAD(+). The enzyme catalyses uridine(54) in tRNA + (6R)-5,10-methylene-5,6,7,8-tetrahydrofolate + NADPH + H(+) = 5-methyluridine(54) in tRNA + (6S)-5,6,7,8-tetrahydrofolate + NADP(+). Its function is as follows. Catalyzes the folate-dependent formation of 5-methyl-uridine at position 54 (M-5-U54) in all tRNAs. In Streptococcus agalactiae serotype III (strain NEM316), this protein is Methylenetetrahydrofolate--tRNA-(uracil-5-)-methyltransferase TrmFO.